We begin with the raw amino-acid sequence, 374 residues long: DNA replication and repair protein RecF (374 aa).

Residue 30 to 37 participates in ATP binding; it reads GNNAQGKS.

Belongs to the RecF family.

The protein resides in the cytoplasm. Functionally, the RecF protein is involved in DNA metabolism; it is required for DNA replication and normal SOS inducibility. RecF binds preferentially to single-stranded, linear DNA. It also seems to bind ATP. The chain is DNA replication and repair protein RecF from Nostoc punctiforme (strain ATCC 29133 / PCC 73102).